The following is a 379-amino-acid chain: Nematocin receptor 1 (379 aa).

Topologically, residues 19 to 48 are extracellular; it reads HNLYLFQMLELQENITDSQPMDPPSLEIMM. An N-linked (GlcNAc...) asparagine glycan is attached at asparagine 32. A helical transmembrane segment spans residues 49-69; it reads LHHLMIILVTLFGNTLLIYVI. The Cytoplasmic portion of the chain corresponds to 70 to 95; the sequence is YKNNAVLRRKRVTPVQMLMLHMCAAD. A helical membrane pass occupies residues 96–116; it reads ILFALISVGPTMAITATVPFF. The Extracellular segment spans residues 117-124; sequence YGPNLLCK. An intrachain disulfide couples cysteine 123 to cysteine 196. Residues 125–145 form a helical membrane-spanning segment; sequence LTKFLQVIPMYASSFLLVAIS. The Cytoplasmic segment spans residues 146-168; sequence ADRYQAICRPLASMKSSIYNRPA. A helical transmembrane segment spans residues 169 to 189; that stretch reads LYSGIAWTAAILFSTPQLYLF. The Extracellular portion of the chain corresponds to 190–207; that stretch reads EKRNGDCSENYTTALQYQ. Residue asparagine 199 is glycosylated (N-linked (GlcNAc...) asparagine). A helical membrane pass occupies residues 208–228; that stretch reads LYVCLFNSVVWLLPSAIAGWL. Residues 229–289 lie on the Cytoplasmic side of the membrane; it reads YLCVCKAVWK…DRRRVQTVKL (61 aa). The chain crosses the membrane as a helical span at residues 290 to 310; it reads TLTIVAANFVLWAPFCITSVI. The Extracellular segment spans residues 311 to 320; it reads DAVWPTAINS. N-linked (GlcNAc...) asparagine glycosylation is present at asparagine 319. The chain crosses the membrane as a helical span at residues 321 to 343; the sequence is TFATYIMFFGNLNSCMNPWLWFH. At 344-379 the chain is on the cytoplasmic side; it reads FNRKQLKRACPCRKSSEPLIQSLVYVHVMTSEQSDF.

It belongs to the G-protein coupled receptor 1 family. Vasopressin/oxytocin receptor subfamily. As to expression, detected in the left ASE gustatory neuron, the chemosensory neuron pairs ASH and ADF, and the PQR tail neuron. In males, detected in hook and tail sensory neurons involved in vulval sensing and hermaphrodite contact, and in spicule protractor muscles.

The protein localises to the cell membrane. Its function is as follows. Receptor for nematocin. The activity of this receptor is mediated by G proteins which activate a phosphatidylinositol-calcium second messenger system. The activity of this receptor may be modulated by ntr-2, leading to reduced intracellular cAMP production. Plays a role in gustatory associative learning. Also plays a role in male mating behavior. The chain is Nematocin receptor 1 from Caenorhabditis elegans.